The chain runs to 364 residues: 3-dehydroquinate synthase (364 aa).

NAD(+) contacts are provided by residues 73–78, 107–111, 131–132, Lys144, Lys153, and 171–174; these read DGEQNK, GVIGD, TT, and CLCT. Zn(2+)-binding residues include Glu186, His249, and His266.

Belongs to the sugar phosphate cyclases superfamily. Dehydroquinate synthase family. It depends on NAD(+) as a cofactor. The cofactor is Co(2+). Zn(2+) serves as cofactor.

It is found in the cytoplasm. The enzyme catalyses 7-phospho-2-dehydro-3-deoxy-D-arabino-heptonate = 3-dehydroquinate + phosphate. It functions in the pathway metabolic intermediate biosynthesis; chorismate biosynthesis; chorismate from D-erythrose 4-phosphate and phosphoenolpyruvate: step 2/7. Functionally, catalyzes the conversion of 3-deoxy-D-arabino-heptulosonate 7-phosphate (DAHP) to dehydroquinate (DHQ). The protein is 3-dehydroquinate synthase of Blochmanniella floridana.